We begin with the raw amino-acid sequence, 81 residues long: Photosystem I iron-sulfur center (81 aa).

4Fe-4S ferredoxin-type domains lie at Ser-2–Trp-31 and Ile-39–Tyr-68. [4Fe-4S] cluster-binding residues include Cys-11, Cys-14, Cys-17, Cys-21, Cys-48, Cys-51, Cys-54, and Cys-58.

The cyanobacterial PSI reaction center is composed of one copy each of PsaA,B,C,D,E,F,I,J,K,L,M and X, and forms trimeric complexes. It depends on [4Fe-4S] cluster as a cofactor.

It localises to the cellular thylakoid membrane. It catalyses the reaction reduced [plastocyanin] + hnu + oxidized [2Fe-2S]-[ferredoxin] = oxidized [plastocyanin] + reduced [2Fe-2S]-[ferredoxin]. Its function is as follows. Apoprotein for the two 4Fe-4S centers FA and FB of photosystem I (PSI); essential for photochemical activity. FB is the terminal electron acceptor of PSI, donating electrons to ferredoxin. The C-terminus interacts with PsaA/B/D and helps assemble the protein into the PSI complex. Required for binding of PsaD and PsaE to PSI. PSI is a plastocyanin/cytochrome c6-ferredoxin oxidoreductase, converting photonic excitation into a charge separation, which transfers an electron from the donor P700 chlorophyll pair to the spectroscopically characterized acceptors A0, A1, FX, FA and FB in turn. The polypeptide is Photosystem I iron-sulfur center (Prochlorococcus marinus (strain MIT 9303)).